Reading from the N-terminus, the 204-residue chain is High frequency lysogenization protein HflD homolog (204 aa).

It belongs to the HflD family.

It localises to the cytoplasm. It is found in the cell inner membrane. The sequence is that of High frequency lysogenization protein HflD homolog from Xanthomonas axonopodis pv. citri (strain 306).